The chain runs to 245 residues: Acetoacetate decarboxylase (245 aa).

Lys-116 acts as the Schiff-base intermediate with acetoacetate in catalysis.

The protein belongs to the ADC family.

The enzyme catalyses acetoacetate + H(+) = acetone + CO2. Functionally, catalyzes the conversion of acetoacetate to acetone and carbon dioxide. This chain is Acetoacetate decarboxylase, found in Acidiphilium cryptum (strain JF-5).